The following is a 328-amino-acid chain: MAAYLERCDSVEEDYIDMEVTSFTNLVRKTLSNNYPREFEFQMSHLCPLEIDKTTSPADELFYKGKLLPLHLPPRLQMVQKILEDYTFDDEFYSTPLATGTVTTPVTSNTPFESCTVSPAESCQVSKELNPEDYFLEYSDSLEEDDEKKKSWTTKLRLMKQSSLGTKIKASRAYLRSFFGKTSCSDESSCASSAARVADEDSVLRYSRVKPFGQIKTERPKKQSNGSVSGSHRRSFSVSMRRQAAKSSNNKSSNSLGFRPLQFLKRSTSSSSEIENSIQGAILHCKQSQQQKQKQKQYSTVNEVGFCSLSASRIAARDDQEWAQMFRG.

A disordered region spans residues 213 to 253 (GQIKTERPKKQSNGSVSGSHRRSFSVSMRRQAAKSSNNKSS). Over residues 223–240 (QSNGSVSGSHRRSFSVSM) the composition is skewed to polar residues.

The protein resides in the cell membrane. This Arabidopsis thaliana (Mouse-ear cress) protein is Probable membrane-associated kinase regulator 4 (MAKR4).